We begin with the raw amino-acid sequence, 1151 residues long: Error-prone DNA polymerase (1151 aa).

A disordered region spans residues 1108–1151 (HPVPSGDALIEPLNDDRRDHADAPAQKIRHPRNVRILPPSRDFH).

Belongs to the DNA polymerase type-C family. DnaE2 subfamily.

It is found in the cytoplasm. The catalysed reaction is DNA(n) + a 2'-deoxyribonucleoside 5'-triphosphate = DNA(n+1) + diphosphate. Functionally, DNA polymerase involved in damage-induced mutagenesis and translesion synthesis (TLS). It is not the major replicative DNA polymerase. In Bradyrhizobium diazoefficiens (strain JCM 10833 / BCRC 13528 / IAM 13628 / NBRC 14792 / USDA 110), this protein is Error-prone DNA polymerase.